The chain runs to 433 residues: tRNA-2-methylthio-N(6)-dimethylallyladenosine synthase (433 aa).

The MTTase N-terminal domain maps to 3–118 (KKLFIQTLGC…ITKAVNTPKF (116 aa)). Residues C12, C49, C81, C150, C154, and C157 each coordinate [4Fe-4S] cluster. The Radical SAM core domain occupies 136-369 (RGSPYKSHIN…QNRHSEILDE (234 aa)). Residues 372 to 433 (AAQKDKIFDV…RMVLYGELQI (62 aa)) form the TRAM domain.

The protein belongs to the methylthiotransferase family. MiaB subfamily. As to quaternary structure, monomer. It depends on [4Fe-4S] cluster as a cofactor.

It localises to the cytoplasm. It carries out the reaction N(6)-dimethylallyladenosine(37) in tRNA + (sulfur carrier)-SH + AH2 + 2 S-adenosyl-L-methionine = 2-methylsulfanyl-N(6)-dimethylallyladenosine(37) in tRNA + (sulfur carrier)-H + 5'-deoxyadenosine + L-methionine + A + S-adenosyl-L-homocysteine + 2 H(+). Its function is as follows. Catalyzes the methylthiolation of N6-(dimethylallyl)adenosine (i(6)A), leading to the formation of 2-methylthio-N6-(dimethylallyl)adenosine (ms(2)i(6)A) at position 37 in tRNAs that read codons beginning with uridine. The sequence is that of tRNA-2-methylthio-N(6)-dimethylallyladenosine synthase from Campylobacter concisus (strain 13826).